The chain runs to 80 residues: RNA-binding protein Hfq (80 aa).

The Sm domain occupies 9–69; the sequence is DVFLNQVRKE…ISTILPITPI (61 aa).

This sequence belongs to the Hfq family. In terms of assembly, homohexamer.

Its function is as follows. RNA chaperone that binds small regulatory RNA (sRNAs) and mRNAs to facilitate mRNA translational regulation in response to envelope stress, environmental stress and changes in metabolite concentrations. Also binds with high specificity to tRNAs. This chain is RNA-binding protein Hfq, found in Alkaliphilus metalliredigens (strain QYMF).